The primary structure comprises 228 residues: MSSTQIRTEIPVALLILCLCLVACHANCPTYRSHLGFWQEGWSGQVYQDWLGRMNCSYENMTALEAVSLNGTRLAAGSPSSEYPNVSVSVEDTSASGSGEDAIDESGSGEEERPVTSHVTFMTQSVQATTELTDALISAFSGSYSSGEPSRTTRIRVSPVAENGRNSGASNRVPFSATTTTTRGRDAHYNAEIRTHLYILWAVGLLLGLVLILYLCVPRCRRKKPYIV.

The N-terminal stretch at 1-26 (MSSTQIRTEIPVALLILCLCLVACHA) is a signal peptide. N-linked (GlcNAc...) asparagine; by host glycosylation is found at N55, N60, N70, and N85. Residues 77–113 (GSPSSEYPNVSVSVEDTSASGSGEDAIDESGSGEEER) are disordered. The segment covering 78–97 (SPSSEYPNVSVSVEDTSASG) has biased composition (polar residues). Residues 197–217 (LYILWAVGLLLGLVLILYLCV) form a helical membrane-spanning segment.

It is found in the host membrane. This is Protein K8.1 (K8.1) from Human herpesvirus 8 type P (isolate GK18) (HHV-8).